The primary structure comprises 327 residues: 4-diphosphocytidyl-2-C-methyl-D-erythritol kinase (327 aa).

Lys14 is a catalytic residue. 97 to 107 is a binding site for ATP; that stretch reads PDGAGLGGGSA. Asp140 is an active-site residue.

This sequence belongs to the GHMP kinase family. IspE subfamily.

It carries out the reaction 4-CDP-2-C-methyl-D-erythritol + ATP = 4-CDP-2-C-methyl-D-erythritol 2-phosphate + ADP + H(+). It functions in the pathway isoprenoid biosynthesis; isopentenyl diphosphate biosynthesis via DXP pathway; isopentenyl diphosphate from 1-deoxy-D-xylulose 5-phosphate: step 3/6. Catalyzes the phosphorylation of the position 2 hydroxy group of 4-diphosphocytidyl-2C-methyl-D-erythritol. The sequence is that of 4-diphosphocytidyl-2-C-methyl-D-erythritol kinase from Oleidesulfovibrio alaskensis (strain ATCC BAA-1058 / DSM 17464 / G20) (Desulfovibrio alaskensis).